A 147-amino-acid chain; its full sequence is uncharacterized protein (147 aa).

The next 2 membrane-spanning stretches (helical) occupy residues 41 to 61 (LANF…ALLI) and 67 to 87 (LLAA…SFPL).

It localises to the cell membrane. This is an uncharacterized protein from Pyrococcus horikoshii (strain ATCC 700860 / DSM 12428 / JCM 9974 / NBRC 100139 / OT-3).